Reading from the N-terminus, the 332-residue chain is Protein FAM131B (332 aa).

The interval 1–22 (MDSTSSLHGSSLHRPSTEQTRT) is disordered. Phosphoserine is present on residues serine 47, serine 114, and serine 117. The tract at residues 221–332 (LGPAFDDSQP…FDEEEGDANN (112 aa)) is disordered. 2 stretches are compositionally biased toward basic and acidic residues: residues 272-281 (PVEEEKRPLA) and 288-302 (AGCRDLESLSPREDP). Residues serine 295, serine 297, and serine 313 each carry the phosphoserine modification. The residue at position 316 (threonine 316) is a Phosphothreonine. Phosphoserine occurs at positions 317, 318, and 322. Positions 323–332 (FDEEEGDANN) are enriched in acidic residues.

This sequence belongs to the FAM131 family.

This chain is Protein FAM131B (Fam131b), found in Rattus norvegicus (Rat).